The primary structure comprises 400 residues: Leucine-rich repeat flightless-interacting protein 2 (400 aa).

Disordered regions lie at residues 1 to 28 (MGTP…SNID) and 53 to 119 (LERQ…LSEV). Serine 18 carries the phosphoserine modification. Residues 29 to 71 (REAEARLAAKRAARAEARDIRMRELERQQKELDEKSDKQYAEN) are a coiled coil. Residues 53 to 68 (LERQQKELDEKSDKQY) show a composition bias toward basic and acidic residues. Residues 73–102 (TRPSSRNSASATTPLSGNSSRRVSGDTSSL) are compositionally biased toward polar residues. Phosphoserine is present on residues serine 77, serine 80, serine 88, serine 92, and serine 96. Threonine 99 carries the post-translational modification Phosphothreonine. 2 positions are modified to phosphoserine: serine 100 and serine 101. Coiled coils occupy residues 106–202 (DTSL…LIEK) and 245–393 (LDVR…KANR).

This sequence belongs to the LRRFIP family. In terms of assembly, interacts with DVL3 and FLII. Weakly interacts with MYD88 in resting cells. Following LPS-stimulation, the interaction with MYD88 is rapidly enhanced; the complex gradually dissociates to basal levels after 6 hours of stimulation. Interaction with MYD88 is regulated by LPS-induced phosphorylation. In the presence of LPS, competes with FLII for MYD88-binding.

Functionally, may function as activator of the canonical Wnt signaling pathway, in association with DVL3, upstream of CTNNB1/beta-catenin. Positively regulates Toll-like receptor (TLR) signaling in response to agonist probably by competing with the negative FLII regulator for MYD88-binding. In Bos taurus (Bovine), this protein is Leucine-rich repeat flightless-interacting protein 2 (LRRFIP2).